We begin with the raw amino-acid sequence, 388 residues long: MNLHEYQAKQLFARYGMPAPTGYACTTPREAEEAASKIGAGPWVVKCQVHAGGRGKAGGVKLVNSKEDIRAFAEQWLGKKLVTYQTDANGQPVHQILVEAATDIDKELYLGAVIDRSSRRVVFMASTEGGVEIEKVAEETPELIHKIALDPLTGPQPYQGRELAFKLGLTGKQVGQFTKIFMGLATLFLERDLAMVEINPLVVTKQGDLICLDGKLGADGNALFRQPELREMRDPSQEDAREAHAAQWELNYVALDGNIGCMVNGAGLAMGTMDIVKLHGGEPANFLDVGGGATKERVTEAFKIILSDDKVKAVFVNIFGGIVRCDLIADGIIGAVEEVGVNVPVVVRLEGNNAELGAKKLADSGLNIIAATSLTDAAQQVVAAVGAK.

Positions 9-244 constitute an ATP-grasp domain; sequence KQLFARYGMP…PSQEDAREAH (236 aa). Residues lysine 46, 53–55, glutamate 99, threonine 102, and glutamate 107 each bind ATP; that span reads GRG. Mg(2+) contacts are provided by asparagine 199 and aspartate 213. Residues asparagine 264 and 321–323 contribute to the substrate site; that span reads GIV.

The protein belongs to the succinate/malate CoA ligase beta subunit family. Heterotetramer of two alpha and two beta subunits. Mg(2+) is required as a cofactor.

The catalysed reaction is succinate + ATP + CoA = succinyl-CoA + ADP + phosphate. The enzyme catalyses GTP + succinate + CoA = succinyl-CoA + GDP + phosphate. It participates in carbohydrate metabolism; tricarboxylic acid cycle; succinate from succinyl-CoA (ligase route): step 1/1. Its function is as follows. Succinyl-CoA synthetase functions in the citric acid cycle (TCA), coupling the hydrolysis of succinyl-CoA to the synthesis of either ATP or GTP and thus represents the only step of substrate-level phosphorylation in the TCA. The beta subunit provides nucleotide specificity of the enzyme and binds the substrate succinate, while the binding sites for coenzyme A and phosphate are found in the alpha subunit. The chain is Succinate--CoA ligase [ADP-forming] subunit beta from Yersinia pseudotuberculosis serotype O:1b (strain IP 31758).